A 441-amino-acid polypeptide reads, in one-letter code: Ribulose bisphosphate carboxylase large chain (441 aa).

Lysine 4 carries the post-translational modification N6,N6,N6-trimethyllysine. Substrate is bound by residues asparagine 113 and threonine 163. Residue lysine 165 is the Proton acceptor of the active site. A substrate-binding site is contributed by lysine 167. Mg(2+)-binding residues include lysine 191, aspartate 193, and glutamate 194. Residue lysine 191 is modified to N6-carboxylysine. The active-site Proton acceptor is the histidine 284. Positions 285, 317, and 369 each coordinate substrate.

It belongs to the RuBisCO large chain family. Type I subfamily. As to quaternary structure, heterohexadecamer of 8 large chains and 8 small chains; disulfide-linked. The disulfide link is formed within the large subunit homodimers. Mg(2+) serves as cofactor. In terms of processing, the disulfide bond which can form in the large chain dimeric partners within the hexadecamer appears to be associated with oxidative stress and protein turnover.

The protein localises to the plastid. It is found in the chloroplast. It carries out the reaction 2 (2R)-3-phosphoglycerate + 2 H(+) = D-ribulose 1,5-bisphosphate + CO2 + H2O. The catalysed reaction is D-ribulose 1,5-bisphosphate + O2 = 2-phosphoglycolate + (2R)-3-phosphoglycerate + 2 H(+). Functionally, ruBisCO catalyzes two reactions: the carboxylation of D-ribulose 1,5-bisphosphate, the primary event in carbon dioxide fixation, as well as the oxidative fragmentation of the pentose substrate in the photorespiration process. Both reactions occur simultaneously and in competition at the same active site. This Darlingtonia californica (California pitcher plant) protein is Ribulose bisphosphate carboxylase large chain.